We begin with the raw amino-acid sequence, 666 residues long: Transketolase (666 aa).

Position 28 (H28) interacts with substrate. Residues H68 and 116–118 each bind thiamine diphosphate; that span reads GPL. D157 contacts Mg(2+). The thiamine diphosphate site is built by G158 and N187. Residues N187 and I189 each contribute to the Mg(2+) site. H262, R356, and S383 together coordinate substrate. Residue H262 coordinates thiamine diphosphate. E410 serves as the catalytic Proton donor. Residue F436 coordinates thiamine diphosphate. Substrate contacts are provided by H460, D468, and R519.

Belongs to the transketolase family. As to quaternary structure, homodimer. Mg(2+) serves as cofactor. Requires Ca(2+) as cofactor. The cofactor is Mn(2+). It depends on Co(2+) as a cofactor. Thiamine diphosphate is required as a cofactor.

It catalyses the reaction D-sedoheptulose 7-phosphate + D-glyceraldehyde 3-phosphate = aldehydo-D-ribose 5-phosphate + D-xylulose 5-phosphate. Catalyzes the transfer of a two-carbon ketol group from a ketose donor to an aldose acceptor, via a covalent intermediate with the cofactor thiamine pyrophosphate. The protein is Transketolase (tkt) of Halalkalibacterium halodurans (strain ATCC BAA-125 / DSM 18197 / FERM 7344 / JCM 9153 / C-125) (Bacillus halodurans).